Here is a 290-residue protein sequence, read N- to C-terminus: 4-diphosphocytidyl-2-C-methyl-D-erythritol kinase (290 aa).

Lysine 8 is a catalytic residue. 92 to 102 is an ATP binding site; it reads PISAGLAGGST. Residue aspartate 134 is part of the active site.

It belongs to the GHMP kinase family. IspE subfamily.

The enzyme catalyses 4-CDP-2-C-methyl-D-erythritol + ATP = 4-CDP-2-C-methyl-D-erythritol 2-phosphate + ADP + H(+). It functions in the pathway isoprenoid biosynthesis; isopentenyl diphosphate biosynthesis via DXP pathway; isopentenyl diphosphate from 1-deoxy-D-xylulose 5-phosphate: step 3/6. Its function is as follows. Catalyzes the phosphorylation of the position 2 hydroxy group of 4-diphosphocytidyl-2C-methyl-D-erythritol. In Caldicellulosiruptor saccharolyticus (strain ATCC 43494 / DSM 8903 / Tp8T 6331), this protein is 4-diphosphocytidyl-2-C-methyl-D-erythritol kinase.